The primary structure comprises 700 residues: Elongation factor G (700 aa).

The 277-residue stretch at 10-286 (NKVRNIGIMA…AVIDYLPNPL (277 aa)) folds into the tr-type G domain. GTP-binding positions include 19–26 (AHIDAGKT), 83–87 (DTPGH), and 137–140 (NKMD).

The protein belongs to the TRAFAC class translation factor GTPase superfamily. Classic translation factor GTPase family. EF-G/EF-2 subfamily.

The protein resides in the cytoplasm. Catalyzes the GTP-dependent ribosomal translocation step during translation elongation. During this step, the ribosome changes from the pre-translocational (PRE) to the post-translocational (POST) state as the newly formed A-site-bound peptidyl-tRNA and P-site-bound deacylated tRNA move to the P and E sites, respectively. Catalyzes the coordinated movement of the two tRNA molecules, the mRNA and conformational changes in the ribosome. This is Elongation factor G from Rhodococcus jostii (strain RHA1).